The primary structure comprises 844 residues: NADPH-Fe(3+) oxidoreductase subunit alpha (844 aa).

The 78-residue stretch at 1 to 78 (MVSLTIDGKD…GIKVTTQSEK (78 aa)) folds into the 2Fe-2S ferredoxin-type domain. Residues Cys34, Cys45, Cys48, and Cys62 each coordinate [2Fe-2S] cluster. In terms of domain architecture, 4Fe-4S His(Cys)3-ligated-type spans 78–117 (KLSRIRQKIMELMLVNHPLDCPVCDAGGECDLQNACYGLG). The [4Fe-4S] cluster site is built by His94, Cys98, Cys101, Cys107, Cys146, Cys149, Cys152, Cys186, Cys189, Cys192, Cys196, Cys222, Cys225, Cys229, and Cys256. 2 4Fe-4S ferredoxin-type domains span residues 137–168 (PLIESDPNRCILCEKCVKVDHEIVGCNAIRVV) and 177–206 (DTVDGNPLNCEFCGNCVAACPTGTLISKPF). One can recognise a 4Fe-4S Mo/W bis-MGD-type domain in the interval 215 to 270 (FTTTPSVCPFCATGCQIEYHSRNGRVERVTSDDSTYNSGNLCINGRFGYSYINSPD).

As to quaternary structure, heterotetramer with 2 beta subunits. [4Fe-4S] cluster is required as a cofactor.

The protein localises to the cell inner membrane. Not regulated by FAD or FMN. In terms of biological role, the SfrAB enzymatic complex is probably involved in acetate metabolism and does not participate directly in the reduction of Fe(3+) chelates. May serve as a major route for NADP regeneration. This Geobacter sulfurreducens (strain DL-1 / KN400) protein is NADPH-Fe(3+) oxidoreductase subunit alpha (sfrA).